The primary structure comprises 338 residues: Ketol-acid reductoisomerase (NADP(+)) (338 aa).

Residues 1 to 181 (MKVFYDKDCD…GGGRAGIIET (181 aa)) enclose the KARI N-terminal Rossmann domain. NADP(+) is bound by residues 24 to 27 (YGSQ), R47, and S52. The active site involves H107. G133 contributes to the NADP(+) binding site. Positions 182 to 327 (NFREETETDL…AKLRAMMPWI (146 aa)) constitute a KARI C-terminal knotted domain. Mg(2+) is bound by residues D190, E194, E226, and E230. Residue S251 participates in substrate binding.

The protein belongs to the ketol-acid reductoisomerase family. Mg(2+) is required as a cofactor.

It carries out the reaction (2R)-2,3-dihydroxy-3-methylbutanoate + NADP(+) = (2S)-2-acetolactate + NADPH + H(+). The enzyme catalyses (2R,3R)-2,3-dihydroxy-3-methylpentanoate + NADP(+) = (S)-2-ethyl-2-hydroxy-3-oxobutanoate + NADPH + H(+). The protein operates within amino-acid biosynthesis; L-isoleucine biosynthesis; L-isoleucine from 2-oxobutanoate: step 2/4. It participates in amino-acid biosynthesis; L-valine biosynthesis; L-valine from pyruvate: step 2/4. Involved in the biosynthesis of branched-chain amino acids (BCAA). Catalyzes an alkyl-migration followed by a ketol-acid reduction of (S)-2-acetolactate (S2AL) to yield (R)-2,3-dihydroxy-isovalerate. In the isomerase reaction, S2AL is rearranged via a Mg-dependent methyl migration to produce 3-hydroxy-3-methyl-2-ketobutyrate (HMKB). In the reductase reaction, this 2-ketoacid undergoes a metal-dependent reduction by NADPH to yield (R)-2,3-dihydroxy-isovalerate. The protein is Ketol-acid reductoisomerase (NADP(+)) of Herminiimonas arsenicoxydans.